A 65-amino-acid chain; its full sequence is Large ribosomal subunit protein uL29 (65 aa).

Belongs to the universal ribosomal protein uL29 family.

This is Large ribosomal subunit protein uL29 from Lactobacillus helveticus (strain DPC 4571).